We begin with the raw amino-acid sequence, 192 residues long: MEERNEQVVEEVKEEVKEAQVEEAVTSEDSEESVEEKSEAALLQEKVDELQAKLTETEGRMLRLQADFENYKRRVQMDKQAAEKYRAQSLVSDILPALDNFERAMQVEANDEQMKSLLQGMEMVYRQLLEAMTKEGVEAIEAVGKQFDPHEHQAVMQVEDSEFESNAVVEEFQKGYKLKDRVIRPSMVKVNQ.

The segment covering 1–20 (MEERNEQVVEEVKEEVKEAQ) has biased composition (basic and acidic residues). The disordered stretch occupies residues 1-39 (MEERNEQVVEEVKEEVKEAQVEEAVTSEDSEESVEEKSE). The segment covering 25–34 (VTSEDSEESV) has biased composition (acidic residues).

This sequence belongs to the GrpE family. Homodimer.

It localises to the cytoplasm. In terms of biological role, participates actively in the response to hyperosmotic and heat shock by preventing the aggregation of stress-denatured proteins, in association with DnaK and GrpE. It is the nucleotide exchange factor for DnaK and may function as a thermosensor. Unfolded proteins bind initially to DnaJ; upon interaction with the DnaJ-bound protein, DnaK hydrolyzes its bound ATP, resulting in the formation of a stable complex. GrpE releases ADP from DnaK; ATP binding to DnaK triggers the release of the substrate protein, thus completing the reaction cycle. Several rounds of ATP-dependent interactions between DnaJ, DnaK and GrpE are required for fully efficient folding. The sequence is that of Protein GrpE from Bacillus cereus (strain ATCC 10987 / NRS 248).